Here is a 322-residue protein sequence, read N- to C-terminus: uncharacterized protein (322 aa).

The next 4 membrane-spanning stretches (helical) occupy residues Leu24–Thr44, Leu68–Ile88, Ile100–Phe120, and Val125–Leu145.

Its subcellular location is the cell membrane. This is an uncharacterized protein from Bacillus subtilis (strain 168).